The sequence spans 633 residues: Probable alkaline/neutral invertase A, chloroplastic (633 aa).

The N-terminal 71 residues, 1–71 (MNAITFLGNS…TNAVPFCTDR (71 aa)), are a transit peptide targeting the chloroplast. Phosphoserine is present on Ser-623.

It belongs to the glycosyl hydrolase 100 family. As to expression, expressed in flowers.

It is found in the plastid. It localises to the chloroplast. The enzyme catalyses Hydrolysis of terminal non-reducing beta-D-fructofuranoside residues in beta-D-fructofuranosides.. Its function is as follows. Chloroplastic invertase that cleaves sucrose into glucose and fructose and may participate in the carbon flux between the cytosol and plastids in leaves. This chain is Probable alkaline/neutral invertase A, chloroplastic, found in Arabidopsis thaliana (Mouse-ear cress).